The following is a 374-amino-acid chain: MSRPHHATLESIKYTSGSLSLLDQSKLPLETVFHDVLTVEDIWSAIKEMRVRGAPAIAVSAALGIAVATQRKVDCGALKSGSEVQAFLLKSCDFVMASRPTAVNLFNCLRDLKAQVDKFDSTKPAGEVAKAFVELAEAVYAEDVGLNESIMRHGAAHILAAAKEYGREKVSILTICNTGALATSRYGTALGVVRQLFYDDKLEKVYACETRPWNQGARLTVYECVQEGIPCTLICDGAASSLMRSHKIDAVVVGADRICQNGDTANKIGTYNLAVLAKFHGVKFYVAASTKTLDAETASGDHVHIEEREPTEITTNMVTKQRVVVDGPHLSIWNPVFDITPGELITGGIITEKGVQGPAASTPHYDIASIVAQE.

Catalysis depends on D256, which acts as the Proton donor.

This sequence belongs to the eIF-2B alpha/beta/delta subunits family. MtnA subfamily.

The protein resides in the cytoplasm. It localises to the nucleus. The catalysed reaction is 5-(methylsulfanyl)-alpha-D-ribose 1-phosphate = 5-(methylsulfanyl)-D-ribulose 1-phosphate. Its pathway is amino-acid biosynthesis; L-methionine biosynthesis via salvage pathway; L-methionine from S-methyl-5-thio-alpha-D-ribose 1-phosphate: step 1/6. In terms of biological role, catalyzes the interconversion of methylthioribose-1-phosphate (MTR-1-P) into methylthioribulose-1-phosphate (MTRu-1-P). This is Methylthioribose-1-phosphate isomerase from Leishmania braziliensis.